A 179-amino-acid chain; its full sequence is MAELSTVARPYAEALFSAARDDKAGLPAWADLIGELAQVAGNPDVREAMTDPRLGDAQRIELFTGLVKTQLPQAVRNFIELLVANDRLLLLPVIAKQFVALKNRHEGTAQAEITSAFELSDAQVKELIEALETKFGLKLKPSVTVDKSLIGGVRVAVGDQVLDTSVQAQLARLRDTLAA.

Belongs to the ATPase delta chain family. In terms of assembly, F-type ATPases have 2 components, F(1) - the catalytic core - and F(0) - the membrane proton channel. F(1) has five subunits: alpha(3), beta(3), gamma(1), delta(1), epsilon(1). F(0) has three main subunits: a(1), b(2) and c(10-14). The alpha and beta chains form an alternating ring which encloses part of the gamma chain. F(1) is attached to F(0) by a central stalk formed by the gamma and epsilon chains, while a peripheral stalk is formed by the delta and b chains.

It is found in the cell inner membrane. Functionally, f(1)F(0) ATP synthase produces ATP from ADP in the presence of a proton or sodium gradient. F-type ATPases consist of two structural domains, F(1) containing the extramembraneous catalytic core and F(0) containing the membrane proton channel, linked together by a central stalk and a peripheral stalk. During catalysis, ATP synthesis in the catalytic domain of F(1) is coupled via a rotary mechanism of the central stalk subunits to proton translocation. Its function is as follows. This protein is part of the stalk that links CF(0) to CF(1). It either transmits conformational changes from CF(0) to CF(1) or is implicated in proton conduction. The sequence is that of ATP synthase subunit delta from Bordetella petrii (strain ATCC BAA-461 / DSM 12804 / CCUG 43448).